The sequence spans 330 residues: PDZ and LIM domain protein 4 (330 aa).

Residues 1 to 84 enclose the PDZ domain; it reads MPHSVTLRGP…HLTLSVSRPE (84 aa). Residues 104 to 180 form a disordered region; it reads IDPEIQDGSP…DPARGLPRSR (77 aa). The span at 111-121 shows a compositional bias: low complexity; the sequence is GSPTTSRRPSG. A phosphoserine mark is found at Ser-112, Ser-116, Ser-120, and Ser-135. Over residues 148-163 the composition is skewed to polar residues; that stretch reads NGSSEATLPAQMSTLH. The LIM zinc-binding domain maps to 253 to 312; that stretch reads PECTRCGHGIVGTIVKARDKLYHPECFMCSDCGLNLKQRGYFFLDERLYCESHAKARVKP.

In terms of assembly, homodimer. Interacts with PTPN13. Interacts (via C-terminus only or via combined C-terminus and LIM domain, but not LIM domain only) with PTPN13 (via the second or fourth PDZ domains). Found in a complex with PTPN13 and TRIP6. Interacts (via PDZ domain) with ACTN1 and ACTN2 (via C-terminal SDL residues). Interacts (via PDZ domain) with TRIP6 (via the second LIM domain or via the third LIM domain plus C-terminus). Interacts (via LIM domain) with GRIA1 (via C-terminus); this interaction as well as the interaction with alpha-actinin is required for their colocalization in early endosomes. Interacts with PDLIM1. Forms (via LIM domain) a heterodimer with PDLIM3. Interacts directly with SRC (via kinase domain and to a lesser extent the SH2 domain). Isoform 2 interacts with NQO1. NQO1-stabilized isoform 2 heterodimerizes with isoform 1. Phosphorylated on tyrosine residue(s). Can be dephosphorylated by PTPN13. As to expression, found in brain.

The protein resides in the cytoplasm. The protein localises to the cytoskeleton. Its subcellular location is the nucleus. It is found in the perinuclear region. It localises to the cell projection. The protein resides in the lamellipodium. The protein localises to the dendritic spine. Its subcellular location is the early endosome membrane. It is found in the recycling endosome membrane. It localises to the synapse. The protein resides in the synaptosome. Suppresses SRC activation by recognizing and binding to active SRC and facilitating PTPN13-mediated dephosphorylation of SRC 'Tyr-419' leading to its inactivation. Inactivated SRC dissociates from this protein allowing the initiation of a new SRC inactivation cycle. Involved in reorganization of the actin cytoskeleton. In nonmuscle cells, binds to ACTN1 (alpha-actinin-1), increases the affinity of ACTN1 to F-actin (filamentous actin), and promotes formation of actin stress fibers. Involved in regulation of the synaptic AMPA receptor transport in dendritic spines of hippocampal pyramidal neurons directing the receptors toward an insertion at the postsynaptic membrane. Links endosomal surface-internalized GRIA1-containing AMPA receptors to the alpha-actinin/actin cytoskeleton. Increases AMPA receptor-mediated excitatory postsynaptic currents in neurons. Functionally, involved in reorganization of the actin cytoskeleton and in regulation of cell migration. In response to oxidative stress, binds to NQO1, which stabilizes it and protects it from ubiquitin-independent degradation by the core 20S proteasome. Stabilized protein is able to heterodimerize with isoform 1 changing the subcellular location of it from cytoskeleton and nuclei to cytosol, leading to loss of isoforms 1 ability to induce formation of actin stress fibers. Counteracts the effects produced by isoform 1 on organization of actin cytoskeleton and cell motility to fine-tune actin cytoskeleton rearrangement and to attenuate cell migration. This is PDZ and LIM domain protein 4 (PDLIM4) from Homo sapiens (Human).